We begin with the raw amino-acid sequence, 431 residues long: Enolase (431 aa).

Q168 serves as a coordination point for (2R)-2-phosphoglycerate. Catalysis depends on E210, which acts as the Proton donor. Mg(2+)-binding residues include D247, E291, and D318. Positions 343, 372, 373, and 394 each coordinate (2R)-2-phosphoglycerate. K343 functions as the Proton acceptor in the catalytic mechanism.

The protein belongs to the enolase family. As to quaternary structure, component of the RNA degradosome, a multiprotein complex involved in RNA processing and mRNA degradation. Requires Mg(2+) as cofactor.

The protein resides in the cytoplasm. It is found in the secreted. It localises to the cell surface. The catalysed reaction is (2R)-2-phosphoglycerate = phosphoenolpyruvate + H2O. It functions in the pathway carbohydrate degradation; glycolysis; pyruvate from D-glyceraldehyde 3-phosphate: step 4/5. In terms of biological role, catalyzes the reversible conversion of 2-phosphoglycerate (2-PG) into phosphoenolpyruvate (PEP). It is essential for the degradation of carbohydrates via glycolysis. This is Enolase from Acinetobacter baumannii (strain AYE).